The sequence spans 225 residues: Glutathione S-transferase U3 (225 aa).

Positions 6-86 (EGVKLIGSWA…YIDQTWTNNP (81 aa)) constitute a GST N-terminal domain. Residues 16–17 (SP), 43–44 (VK), 57–58 (KV), and 70–71 (ES) contribute to the glutathione site. Residues 91-218 (SPYDKAMARF…EKHIEHMMKI (128 aa)) enclose the GST C-terminal domain. Threonine 152 carries the post-translational modification Phosphothreonine.

The protein belongs to the GST superfamily. Tau family.

It is found in the cytoplasm. Its subcellular location is the cytosol. It catalyses the reaction RX + glutathione = an S-substituted glutathione + a halide anion + H(+). May be involved in the conjugation of reduced glutathione to a wide number of exogenous and endogenous hydrophobic electrophiles and have a detoxification role against certain herbicides. The protein is Glutathione S-transferase U3 (GSTU3) of Arabidopsis thaliana (Mouse-ear cress).